The primary structure comprises 238 residues: Fibroblast growth factor-binding protein 1 (238 aa).

The signal sequence occupies residues 1-20 (MRIHGLILLSFLLLAAQVLS). A disordered region spans residues 25–61 (KTAKNVPDSTTEEDMSPSLGKARNKQRSRTSKSMTHG). Intrachain disulfides connect Cys-71–Cys-88, Cys-97–Cys-130, and Cys-106–Cys-142. O-linked (GalNAc...) serine glycosylation occurs at Ser-164. The sufficient for interaction with FGF2 and FGF2-induced effects stretch occupies residues 197–238 (KDSECLEDPDVLTQRKTALEFCGESWSSFCTFFLNMLQATSC). Cystine bridges form between Cys-201–Cys-238 and Cys-218–Cys-226.

Belongs to the fibroblast growth factor-binding protein family. Found in a complex with FGFBP1, FGF1 and FGF2. Interacts with FGF1, FGF2, FGF7, FGF10, FGF22 and HSPG2. In terms of tissue distribution, expressed in gut, eye, thymus, skin, lung, tongue, Purkinje cells and cerebral chorioid plexus (at protein level).

Its subcellular location is the secreted. It is found in the extracellular space. The protein resides in the cell membrane. Acts as a carrier protein that release fibroblast-binding factors (FGFs) from the extracellular matrix (EM) storage and thus enhance the mitogenic activity of FGFs. Enhances FGF2 signaling during tissue repair, angiogenesis and in tumor growth. This is Fibroblast growth factor-binding protein 1 (Fgfbp1) from Rattus norvegicus (Rat).